The chain runs to 487 residues: Acetyl-coenzyme A carboxylase carboxyl transferase subunit beta, chloroplastic (487 aa).

Residues 223–487 (LWIQCDNCYG…FFPLKKNEIK (265 aa)) enclose the CoA carboxyltransferase N-terminal domain. Zn(2+) is bound by residues cysteine 227, cysteine 230, cysteine 243, and cysteine 246. The C4-type zinc finger occupies 227-246 (CDNCYGLMYKKVKMNVCEQC).

This sequence belongs to the AccD/PCCB family. As to quaternary structure, acetyl-CoA carboxylase is a heterohexamer composed of biotin carboxyl carrier protein, biotin carboxylase and 2 subunits each of ACCase subunit alpha and ACCase plastid-coded subunit beta (accD). Zn(2+) is required as a cofactor.

It localises to the plastid. It is found in the chloroplast stroma. The catalysed reaction is N(6)-carboxybiotinyl-L-lysyl-[protein] + acetyl-CoA = N(6)-biotinyl-L-lysyl-[protein] + malonyl-CoA. Its pathway is lipid metabolism; malonyl-CoA biosynthesis; malonyl-CoA from acetyl-CoA: step 1/1. Component of the acetyl coenzyme A carboxylase (ACC) complex. Biotin carboxylase (BC) catalyzes the carboxylation of biotin on its carrier protein (BCCP) and then the CO(2) group is transferred by the transcarboxylase to acetyl-CoA to form malonyl-CoA. This Lepidium virginicum (Virginia pepperweed) protein is Acetyl-coenzyme A carboxylase carboxyl transferase subunit beta, chloroplastic.